We begin with the raw amino-acid sequence, 68 residues long: UPF0435 protein SAOUHSC_02093 (68 aa).

The protein belongs to the UPF0435 family.

The protein is UPF0435 protein SAOUHSC_02093 of Staphylococcus aureus (strain NCTC 8325 / PS 47).